The primary structure comprises 564 residues: Dihydroxy-acid dehydratase (564 aa).

Residues 1 to 10 (MTDTRTKRRM) show a composition bias toward basic residues. Positions 1–23 (MTDTRTKRRMNWNSHHITQGDER) are disordered. Position 57 (C57) interacts with [2Fe-2S] cluster. Residue D89 coordinates Mg(2+). C130 is a [2Fe-2S] cluster binding site. Positions 131 and 132 each coordinate Mg(2+). At K132 the chain carries N6-carboxylysine. C202 provides a ligand contact to [2Fe-2S] cluster. E454 serves as a coordination point for Mg(2+). S480 functions as the Proton acceptor in the catalytic mechanism.

It belongs to the IlvD/Edd family. In terms of assembly, homodimer. It depends on [2Fe-2S] cluster as a cofactor. The cofactor is Mg(2+).

It carries out the reaction (2R)-2,3-dihydroxy-3-methylbutanoate = 3-methyl-2-oxobutanoate + H2O. The catalysed reaction is (2R,3R)-2,3-dihydroxy-3-methylpentanoate = (S)-3-methyl-2-oxopentanoate + H2O. It participates in amino-acid biosynthesis; L-isoleucine biosynthesis; L-isoleucine from 2-oxobutanoate: step 3/4. The protein operates within amino-acid biosynthesis; L-valine biosynthesis; L-valine from pyruvate: step 3/4. Its function is as follows. Functions in the biosynthesis of branched-chain amino acids. Catalyzes the dehydration of (2R,3R)-2,3-dihydroxy-3-methylpentanoate (2,3-dihydroxy-3-methylvalerate) into 2-oxo-3-methylpentanoate (2-oxo-3-methylvalerate) and of (2R)-2,3-dihydroxy-3-methylbutanoate (2,3-dihydroxyisovalerate) into 2-oxo-3-methylbutanoate (2-oxoisovalerate), the penultimate precursor to L-isoleucine and L-valine, respectively. This is Dihydroxy-acid dehydratase from Deinococcus geothermalis (strain DSM 11300 / CIP 105573 / AG-3a).